Reading from the N-terminus, the 84-residue chain is Small ribosomal subunit protein eS27-like (84 aa).

Residues 1–16 (MPLARDLLHPSLEEEK) show a composition bias toward basic and acidic residues. The disordered stretch occupies residues 1 to 23 (MPLARDLLHPSLEEEKKKHKKKR). The segment at 38-60 (PGCYKITTVFSHAQTVVLCVGCS) adopts a C4-type zinc-finger fold.

Belongs to the eukaryotic ribosomal protein eS27 family. It depends on Zn(2+) as a cofactor.

The chain is Small ribosomal subunit protein eS27-like from Mus musculus (Mouse).